The following is a 484-amino-acid chain: Dual specificity protein kinase CLK1 (484 aa).

Residues 1-42 (MRHSKRTYCPDWDDKDWDYGKWRSSSSHKRRKRSHSSAQENK) form a disordered region. Residues 26–35 (SSHKRRKRSH) show a composition bias toward basic residues. Phosphoserine is present on Ser-61. The interval 79–146 (DYTQGCEPGH…RTRSVEDDEE (68 aa)) is disordered. Positions 86 to 97 (PGHRQRDHESRY) are enriched in basic and acidic residues. Residues 100-112 (HSSKSSGRSGRSS) are compositionally biased toward low complexity. Basic residues predominate over residues 113 to 138 (YKSKHRIHHSTSHRRSHGKSHRRKRT). Thr-138 carries the phosphothreonine modification. Ser-140 bears the Phosphoserine mark. One can recognise a Protein kinase domain in the interval 161 to 477 (YEIVDTLGEG…LREALKHPFF (317 aa)). ATP contacts are provided by residues 167 to 175 (LGEGAFGKV) and Lys-191. Asp-288 functions as the Proton acceptor in the catalytic mechanism.

It belongs to the protein kinase superfamily. CMGC Ser/Thr protein kinase family. Lammer subfamily. Interacts with PPIG and UBL5. Post-translationally, autophosphorylates on all three types of residues. In terms of tissue distribution, endothelial cells.

It localises to the nucleus. It carries out the reaction L-seryl-[protein] + ATP = O-phospho-L-seryl-[protein] + ADP + H(+). The enzyme catalyses L-threonyl-[protein] + ATP = O-phospho-L-threonyl-[protein] + ADP + H(+). It catalyses the reaction L-tyrosyl-[protein] + ATP = O-phospho-L-tyrosyl-[protein] + ADP + H(+). With respect to regulation, regulates splicing of its own pre-mRNA according to its kinase activity; increased expression of the catalytically active form influences splicing to generate the catalytically inactive splicing variant lacking the kinase domain. Leucettine L41 inhibits its kinase activity and affects the regulation of alternative splicing mediated by phosphorylation of SR proteins. Its function is as follows. Dual specificity kinase acting on both serine/threonine and tyrosine-containing substrates. Phosphorylates serine- and arginine-rich (SR) proteins of the spliceosomal complex and may be a constituent of a network of regulatory mechanisms that enable SR proteins to control RNA splicing. Phosphorylates: SRSF1, SRSF3 and PTPN1. Regulates the alternative splicing of tissue factor (F3) pre-mRNA in endothelial cells. The polypeptide is Dual specificity protein kinase CLK1 (Homo sapiens (Human)).